The sequence spans 535 residues: Methylmalonate-semialdehyde/malonate-semialdehyde dehydrogenase [acylating], mitochondrial (535 aa).

Residues 1-33 (MAALLAAAAVRARILQVSSKVKSSPTWYSASSF) constitute a mitochondrion transit peptide. N6-acetyllysine; alternate occurs at positions 47, 52, 55, and 76. K47, K52, K55, and K76 each carry N6-succinyllysine; alternate. K87 carries the N6-acetyllysine modification. An N6-acetyllysine; alternate mark is found at K117 and K129. Residues K117 and K129 each carry the N6-succinyllysine; alternate modification. NAD(+) contacts are provided by A183, F185, K209, E212, R213, and S262. Residue S262 is modified to Phosphoserine. Position 298 is an N6-acetyllysine (K298). C317 serves as the catalytic Nucleophile. N6-acetyllysine is present on residues K330 and K331. Residues K364 and K376 each carry the N6-acetyllysine; alternate modification. N6-succinyllysine; alternate occurs at positions 364 and 376. S380 carries the post-translational modification Phosphoserine. An N6-succinyllysine modification is found at K391. E417 contacts NAD(+). K500 bears the N6-acetyllysine mark. K517 bears the N6-succinyllysine mark.

It belongs to the aldehyde dehydrogenase family. Homotetramer.

Its subcellular location is the mitochondrion. It catalyses the reaction 3-oxopropanoate + NAD(+) + CoA + H2O = hydrogencarbonate + acetyl-CoA + NADH + H(+). It carries out the reaction 2-methyl-3-oxopropanoate + NAD(+) + CoA + H2O = propanoyl-CoA + hydrogencarbonate + NADH + H(+). The enzyme catalyses (R)-2-methyl-3-oxopropanoate + NAD(+) + CoA + H2O = propanoyl-CoA + hydrogencarbonate + NADH + H(+). The catalysed reaction is (S)-2-methyl-3-oxopropanoate + NAD(+) + CoA + H2O = propanoyl-CoA + hydrogencarbonate + NADH + H(+). Malonate and methylmalonate semialdehyde dehydrogenase involved in the catabolism of valine, thymine, and compounds catabolized by way of beta-alanine, including uracil and cytidine. The protein is Methylmalonate-semialdehyde/malonate-semialdehyde dehydrogenase [acylating], mitochondrial of Homo sapiens (Human).